A 34-amino-acid polypeptide reads, in one-letter code: Potassium channel toxin alpha-KTx 6 hetlaxin (34 aa).

4 cysteine pairs are disulfide-bonded: C3/C24, C9/C29, C13/C31, and C19/C34. The residue at position 34 (C34) is a Cysteine amide.

In terms of processing, contains 4 disulfide bonds. In terms of tissue distribution, expressed by the venom gland.

It localises to the secreted. Its function is as follows. Binds to voltage-gated potassium channels Kv1.3/KCNA3 (IC(50)=0.48 uM) and Kv1.1/KCNA1 (IC(50)=6.7 uM) and inhibits channel activity. The sequence is that of Potassium channel toxin alpha-KTx 6 hetlaxin from Heterometrus laoticus (Thai giant scorpion).